Here is a 179-residue protein sequence, read N- to C-terminus: Large ribosomal subunit protein uL6 (179 aa).

Belongs to the universal ribosomal protein uL6 family. In terms of assembly, part of the 50S ribosomal subunit.

In terms of biological role, this protein binds to the 23S rRNA, and is important in its secondary structure. It is located near the subunit interface in the base of the L7/L12 stalk, and near the tRNA binding site of the peptidyltransferase center. In Desulfovibrio desulfuricans (strain ATCC 27774 / DSM 6949 / MB), this protein is Large ribosomal subunit protein uL6.